The chain runs to 74 residues: Conotoxin AbVIL (74 aa).

The N-terminal stretch at 1-17 (VLIIAVLFLTACQLTTA) is a signal peptide. A disordered region spans residues 17–41 (AETSSRGEQKHRAPRSTDKNSRMTK). A propeptide spanning residues 18–40 (ETSSRGEQKHRAPRSTDKNSRMT) is cleaved from the precursor. Residues 21–37 (SRGEQKHRAPRSTDKNS) are compositionally biased toward basic and acidic residues. Disulfide bonds link C43–C57, C50–C61, and C56–C68.

This sequence belongs to the conotoxin O1 superfamily. As to expression, expressed by the venom duct.

It is found in the secreted. The sequence is that of Conotoxin AbVIL from Conus abbreviatus (Abbreviated cone).